The primary structure comprises 204 residues: Somatotropin (204 aa).

Positions 1 to 17 (MDRVVLLLSVLSLGVSS) are cleaved as a signal peptide. Position 18 is a pyrrolidone carboxylic acid (Gln18). Intrachain disulfides connect Cys69–Cys177 and Cys194–Cys202.

The protein belongs to the somatotropin/prolactin family.

It is found in the secreted. Functionally, growth hormone plays an important role in growth control and is involved in the regulation of several anabolic processes. Implicated as an osmoregulatory substance important for seawater adaptation. The polypeptide is Somatotropin (gh) (Seriola quinqueradiata (Five-ray yellowtail)).